We begin with the raw amino-acid sequence, 225 residues long: Sodium-dependent neutral amino acid transporter SLC6A17 (225 aa).

The next 3 membrane-spanning stretches (helical) occupy residues 1 to 8 (NVWRFPYL), 16 to 35 (AYLV…LFFL), and 60 to 80 (GIGF…NVII). Over 81-143 (GWSIFYFFKS…NSISESGGLN (63 aa)) the chain is Extracellular. N105 is a glycosylation site (N-linked (GlcNAc...) asparagine). A run of 3 helical transmembrane segments spans residues 144–162 (WKMT…MAVV), 171–188 (VMYF…CFLV), and 224–225 (IF).

It belongs to the sodium:neurotransmitter symporter (SNF) (TC 2.A.22) family.

It localises to the cytoplasmic vesicle. Its subcellular location is the secretory vesicle. It is found in the synaptic vesicle membrane. The protein localises to the postsynapse. The protein resides in the presynapse. The catalysed reaction is L-proline(in) + Na(+)(in) = L-proline(out) + Na(+)(out). It catalyses the reaction L-leucine(in) + Na(+)(in) = L-leucine(out) + Na(+)(out). It carries out the reaction glycine(in) + Na(+)(in) = glycine(out) + Na(+)(out). The enzyme catalyses L-alanine(in) + Na(+)(in) = L-alanine(out) + Na(+)(out). The catalysed reaction is L-glutamine(in) + Na(+)(in) = L-glutamine(out) + Na(+)(out). Synaptic vesicle transporter with apparent selectivity for neutral amino acids. The transport is sodium-coupled but chloride-independent, likely driven by the proton electrochemical gradient generated by vacuolar H(+)-ATPase in an overall electrogenic mechanism. May contribute to the synaptic uptake of neurotransmitter precursors in a process coupled in part to vesicle exocytosis. This chain is Sodium-dependent neutral amino acid transporter SLC6A17, found in Bos taurus (Bovine).